The primary structure comprises 448 residues: MREIVHLQTGQCGNQIGAAFWQTISGEHGLDSNGVYNGTSELQLERMSVYFNEASGNKYVPRAVLVDLEPGTMDAVRAGPFGQLFRPDNFVFGQSGAGNNWAKGHYTEGAELVDQVLDVVRREAEGCDCLQGFQITHSLGGGTGAGMGTLLISKIREEFPDRMMATFSVVPSPKVSDTVVEPYNATLSVHQLVENSDETFCIDNEALYDICMRTLKLSNPSYGDLNYLVSAVMSGVTTCLRFPGQLNSDLRKLAVNMVPFPRLHFFMVGFAPLTSRGAHSFRAVSVPELTQQMFDPKNMMAASDFRNGRYLTCSAIFRGKVAMKEVEDQMRNVQNKNSSYFVEWIPNNIQTALCAIPPRDLKMSSTFIGNSTSIQELFKRVGEQFTAMFRRKAFLHWYTGEGMDEMEFTEAESNMNDLVSEYQQYQDAGIDEEEEEYEEEAPVDEPLE.

Residues Gln11, Glu69, Ser138, Gly142, Thr143, Gly144, Asn204, and Asn226 each coordinate GTP. Glu69 serves as a coordination point for Mg(2+). A disordered region spans residues 426–448; sequence QDAGIDEEEEEYEEEAPVDEPLE. Acidic residues predominate over residues 429 to 448; it reads GIDEEEEEYEEEAPVDEPLE.

Belongs to the tubulin family. Dimer of alpha and beta chains. A typical microtubule is a hollow water-filled tube with an outer diameter of 25 nm and an inner diameter of 15 nM. Alpha-beta heterodimers associate head-to-tail to form protofilaments running lengthwise along the microtubule wall with the beta-tubulin subunit facing the microtubule plus end conferring a structural polarity. Microtubules usually have 13 protofilaments but different protofilament numbers can be found in some organisms and specialized cells. Mg(2+) serves as cofactor.

It is found in the cytoplasm. The protein localises to the cytoskeleton. Its function is as follows. Tubulin is the major constituent of microtubules, a cylinder consisting of laterally associated linear protofilaments composed of alpha- and beta-tubulin heterodimers. Microtubules grow by the addition of GTP-tubulin dimers to the microtubule end, where a stabilizing cap forms. Below the cap, tubulin dimers are in GDP-bound state, owing to GTPase activity of alpha-tubulin. This Epichloe coenophiala (Tall fescue endophyte fungus) protein is Tubulin beta chain (TUB2).